The chain runs to 360 residues: MTKKIIFTGGGTAGHVTLNLILIPKFIKDGWEVHYIGDDNGIEHQEIKKSGLDVAFHTIATGKLRRYFSWQNLLDIFKVGFGVMQSLFIIARLRPKALFSKGGFVSVPPVIAARLLGVPAFIHESDLSMGLANRIAYRFATTMYTTFEQEQTLVKLKHVGAVTKVTAPKSHSVASKQLAAVLEYFDPNLKTLLFIGGSAGARVFNRFITDHPELKEDFNIINISGDPSLNELSRHLYRVDYVTDLYQPLMEMADLVVTRGGSNTLFELLAMRKLQLIIPLGKEASRGDQLENAHYFTTRGYAEQLLEQELTLPHFQEKVREVFAKQSDYLSAMTSSSELQSPESFYQLLSADISSATKEN.

UDP-N-acetyl-alpha-D-glucosamine-binding positions include threonine 12 to glycine 14, serine 198, and glutamine 289.

The protein belongs to the glycosyltransferase 28 family. MurG subfamily.

The protein localises to the cell membrane. The enzyme catalyses Mur2Ac(oyl-L-Ala-gamma-D-Glu-L-Lys-D-Ala-D-Ala)-di-trans,octa-cis-undecaprenyl diphosphate + UDP-N-acetyl-alpha-D-glucosamine = beta-D-GlcNAc-(1-&gt;4)-Mur2Ac(oyl-L-Ala-gamma-D-Glu-L-Lys-D-Ala-D-Ala)-di-trans,octa-cis-undecaprenyl diphosphate + UDP + H(+). The protein operates within cell wall biogenesis; peptidoglycan biosynthesis. Cell wall formation. Catalyzes the transfer of a GlcNAc subunit on undecaprenyl-pyrophosphoryl-MurNAc-pentapeptide (lipid intermediate I) to form undecaprenyl-pyrophosphoryl-MurNAc-(pentapeptide)GlcNAc (lipid intermediate II). The polypeptide is UDP-N-acetylglucosamine--N-acetylmuramyl-(pentapeptide) pyrophosphoryl-undecaprenol N-acetylglucosamine transferase (Streptococcus equi subsp. zooepidemicus (strain H70)).